The following is a 191-amino-acid chain: Protein GrpE (191 aa).

A compositionally biased stretch (basic and acidic residues) spans 1–11; it reads MTDSSNAHEAE. 2 disordered regions span residues 1-22 and 172-191; these read MTDS…DNEI and KVSK…NNNE.

The protein belongs to the GrpE family. As to quaternary structure, homodimer.

Its subcellular location is the cytoplasm. Functionally, participates actively in the response to hyperosmotic and heat shock by preventing the aggregation of stress-denatured proteins, in association with DnaK and GrpE. It is the nucleotide exchange factor for DnaK and may function as a thermosensor. Unfolded proteins bind initially to DnaJ; upon interaction with the DnaJ-bound protein, DnaK hydrolyzes its bound ATP, resulting in the formation of a stable complex. GrpE releases ADP from DnaK; ATP binding to DnaK triggers the release of the substrate protein, thus completing the reaction cycle. Several rounds of ATP-dependent interactions between DnaJ, DnaK and GrpE are required for fully efficient folding. This is Protein GrpE from Chlamydia abortus (strain DSM 27085 / S26/3) (Chlamydophila abortus).